The following is a 154-amino-acid chain: Iron sulfur cluster assembly protein 1, mitochondrial (154 aa).

Belongs to the NifU family. As to quaternary structure, component of the core Fe-S cluster (ISC) assembly machinery. The cofactor is [2Fe-2S] cluster.

Its subcellular location is the mitochondrion matrix. Its pathway is cofactor biosynthesis; iron-sulfur cluster biosynthesis. Scaffold protein for the de novo synthesis of iron-sulfur (Fe-S) clusters within mitochondria, which is required for maturation of both mitochondrial and cytoplasmic [2Fe-2S] and [4Fe-4S] proteins. First, a [2Fe-2S] cluster is transiently assembled on the scaffold protein ISU1. In a second step, the cluster is released from ISU1, transferred to a glutaredoxin, followed by the formation of mitochondrial [2Fe-2S] proteins, the synthesis of [4Fe-4S] clusters and their target-specific insertion into the recipient apoproteins. Cluster assembly on ISU1 depends on the function of the cysteine desulfurase complex NFS1-ISD11, which serves as the sulfur donor for cluster synthesis, the iron-binding protein frataxin as the putative iron donor, and the electron transfer chain comprised of ferredoxin reductase and ferredoxin, which receive their electrons from NADH. The protein is Iron sulfur cluster assembly protein 1, mitochondrial (ISU1) of Eremothecium gossypii (strain ATCC 10895 / CBS 109.51 / FGSC 9923 / NRRL Y-1056) (Yeast).